Reading from the N-terminus, the 179-residue chain is Large ribosomal subunit protein uL5 (179 aa).

Belongs to the universal ribosomal protein uL5 family. In terms of assembly, part of the 50S ribosomal subunit; part of the 5S rRNA/L5/L18/L25 subcomplex. Contacts the 5S rRNA and the P site tRNA. Forms a bridge to the 30S subunit in the 70S ribosome.

Functionally, this is one of the proteins that bind and probably mediate the attachment of the 5S RNA into the large ribosomal subunit, where it forms part of the central protuberance. In the 70S ribosome it contacts protein S13 of the 30S subunit (bridge B1b), connecting the 2 subunits; this bridge is implicated in subunit movement. Contacts the P site tRNA; the 5S rRNA and some of its associated proteins might help stabilize positioning of ribosome-bound tRNAs. In Rickettsia peacockii (strain Rustic), this protein is Large ribosomal subunit protein uL5.